Consider the following 516-residue polypeptide: Maturase K (516 aa).

The protein belongs to the intron maturase 2 family. MatK subfamily.

It is found in the plastid. Its subcellular location is the chloroplast. Usually encoded in the trnK tRNA gene intron. Probably assists in splicing its own and other chloroplast group II introns. This chain is Maturase K, found in Chara connivens (Convergent stonewort).